Reading from the N-terminus, the 331-residue chain is DNA-directed RNA polymerase subunit alpha (331 aa).

The interval 1–246 (MMQTSRTLHN…GLFSPLQEVS (246 aa)) is alpha N-terminal domain (alpha-NTD). The alpha C-terminal domain (alpha-CTD) stretch occupies residues 256–331 (AEDNQKNQIP…LTLPRERSKT (76 aa)).

It belongs to the RNA polymerase alpha chain family. In cyanobacteria the RNAP catalytic core is composed of 2 alpha, 1 beta, 1 beta', 1 gamma and 1 omega subunit. When a sigma factor is associated with the core the holoenzyme is formed, which can initiate transcription.

The catalysed reaction is RNA(n) + a ribonucleoside 5'-triphosphate = RNA(n+1) + diphosphate. In terms of biological role, DNA-dependent RNA polymerase catalyzes the transcription of DNA into RNA using the four ribonucleoside triphosphates as substrates. This Synechococcus sp. (strain JA-3-3Ab) (Cyanobacteria bacterium Yellowstone A-Prime) protein is DNA-directed RNA polymerase subunit alpha.